A 2170-amino-acid polypeptide reads, in one-letter code: Supervillin (2170 aa).

The interval 1–167 is interaction with MYLK; the sequence is MKRKERIARR…NSRHSRTESG (167 aa). Disordered regions lie at residues 37 to 94, 107 to 327, 413 to 444, 511 to 546, and 567 to 643; these read EDTP…HSLE, RRRQ…QSES, PEPL…NKDL, DYTG…GAEA, and RASK…EDEE. Serine 50 carries the phosphoserine modification. Polar residues-rich tracts occupy residues 63-73 and 81-90; these read PGSSLEKQTPS and GIHSSGSMDT. Over residues 134–166 the composition is skewed to basic and acidic residues; the sequence is SRKDPDVTERRGKSDKQEEQSKDANSRHSRTES. Over residues 167–195 the composition is skewed to polar residues; the sequence is GPRTSLVASQDCTPLGSNMSDQEQLLNVE. Residues serine 220, serine 227, and serine 241 each carry the phosphoserine modification. Over residues 230–241 the composition is skewed to polar residues; it reads QIPSSPLQQPAS. Basic and acidic residues-rich tracts occupy residues 261–272 and 286–297; these read PTHEWFLQRDSE and KVREKLVKEESA. Residues 298 to 313 show a composition bias toward polar residues; sequence RSSPELTSESLTQRRQ. Phosphoserine is present on residues serine 299 and serine 300. Residues 427 to 444 are compositionally biased toward basic and acidic residues; sequence EDDRLVRGHKDPSGNKDL. Composition is skewed to basic and acidic residues over residues 570 to 582 and 606 to 615; these read KKPE…ERSA and ESRKTSERFR. A phosphoserine mark is found at serine 632, serine 666, serine 728, and serine 761. The disordered stretch occupies residues 743 to 771; sequence ASAHQKALARDQANEGRESAEPGEPDSST. Over residues 750 to 762 the composition is skewed to basic and acidic residues; it reads LARDQANEGRESA. A Phosphotyrosine modification is found at tyrosine 809. Phosphothreonine is present on threonine 811. Serine 857, serine 877, and serine 881 each carry phosphoserine. The interval 887–909 is disordered; it reads AWRPLVEHSGSKGMPGESGKTES. A phosphoserine mark is found at serine 960, serine 1011, serine 1031, and serine 1077. Residues 1117–1137 are disordered; it reads HTQEVEQSLKKKRVTESRESQ. A compositionally biased stretch (basic and acidic residues) spans 1119-1137; sequence QEVEQSLKKKRVTESRESQ. The residue at position 1159 (arginine 1159) is an Omega-N-methylarginine. Phosphoserine occurs at positions 1181 and 1184. Threonine 1186 carries the phosphothreonine modification. Phosphoserine is present on residues serine 1190, serine 1278, and serine 1361. Residues 1375 to 1643 form an interaction with NEB region; that stretch reads SNINLRSVNL…KFLDWTELKR (269 aa). Gelsolin-like repeat units follow at residues 1397–1496, 1516–1638, 1708–1818, 1837–1938, and 1971–2078; these read KKLM…LGGQ, IETN…FLDW, VSVD…FQGG, WRLY…LGRR, and ATEF…FPSW. In terms of domain architecture, HP spans 2107–2170; sequence KLCKTIYPLA…VNLKKSKGLF (64 aa).

It belongs to the villin/gelsolin family. As to quaternary structure, associates with F-actin. Interacts with NEB. Interacts with MYH9. Interacts with MYLK. Interacts with TASOR. Interacts with TRIP6. Interacts with DYNLT1. Interacts with KIF14; at midbody during cytokinesis. In terms of tissue distribution, expressed in the heart, tongue and granular cells within the cerebellum.

The protein resides in the cell membrane. It localises to the cytoplasm. It is found in the cytoskeleton. Its subcellular location is the cell projection. The protein localises to the invadopodium. The protein resides in the podosome. It localises to the midbody. It is found in the cleavage furrow. Functionally, forms a high-affinity link between the actin cytoskeleton and the membrane. Is among the first costameric proteins to assemble during myogenesis and it contributes to myogenic membrane structure and differentiation. Appears to be involved in myosin II assembly. May modulate myosin II regulation through MLCK during cell spreading, an initial step in cell migration. May play a role in invadopodial function. May be involved in modulation of focal adhesions. Supervillin-mediated down-regulation of focal adhesions involves binding to TRIP6. Plays a role in cytokinesis through KIF14 interaction. The polypeptide is Supervillin (Svil) (Mus musculus (Mouse)).